The sequence spans 264 residues: ORC1-type DNA replication protein 2 (264 aa).

Residues 73 to 77 (TGKSL), tyrosine 220, and arginine 232 contribute to the ATP site.

Belongs to the CDC6/cdc18 family.

In terms of biological role, involved in regulation of DNA replication. The protein is ORC1-type DNA replication protein 2 (orc2) of Halobacterium salinarum (strain ATCC 700922 / JCM 11081 / NRC-1) (Halobacterium halobium).